A 331-amino-acid polypeptide reads, in one-letter code: Phosphate acyltransferase (331 aa).

It belongs to the PlsX family. In terms of assembly, homodimer. Probably interacts with PlsY.

It is found in the cytoplasm. The catalysed reaction is a fatty acyl-[ACP] + phosphate = an acyl phosphate + holo-[ACP]. It functions in the pathway lipid metabolism; phospholipid metabolism. Functionally, catalyzes the reversible formation of acyl-phosphate (acyl-PO(4)) from acyl-[acyl-carrier-protein] (acyl-ACP). This enzyme utilizes acyl-ACP as fatty acyl donor, but not acyl-CoA. This chain is Phosphate acyltransferase, found in Clostridium acetobutylicum (strain ATCC 824 / DSM 792 / JCM 1419 / IAM 19013 / LMG 5710 / NBRC 13948 / NRRL B-527 / VKM B-1787 / 2291 / W).